A 293-amino-acid chain; its full sequence is MAWIQIRINSTNTQAEQMSDYLAEIGAVSVTFMDSQDTPIFEPLPGETRLWGNTDVVALFDAETDMQQIVDLLKEAQYLVESSVYKIEQIEDKDWEREWMDNFHPMRFGKRLWICPSWREVPDENATNVMLDPGLAFGTGTHPTTALCLEWLDSLDLQDKTVIDFGCGSGILAIAALKLGAKSAVGIDIDPQAILASRNNAEQNGVADRLQLFLSEDKPADLKADVVVANILAGPLKELYPVIRQLVKPNGVLGLSGILATQASSVCDAYAQSFVLEPVEEREEWCRITGKLQ.

S-adenosyl-L-methionine-binding residues include threonine 145, glycine 166, aspartate 188, and asparagine 230.

Belongs to the methyltransferase superfamily. PrmA family.

The protein localises to the cytoplasm. The catalysed reaction is L-lysyl-[protein] + 3 S-adenosyl-L-methionine = N(6),N(6),N(6)-trimethyl-L-lysyl-[protein] + 3 S-adenosyl-L-homocysteine + 3 H(+). Its function is as follows. Methylates ribosomal protein L11. In Pasteurella multocida (strain Pm70), this protein is Ribosomal protein L11 methyltransferase.